The following is a 387-amino-acid chain: Growth-regulating factor 3 (387 aa).

Residues 53–88 enclose the QLQ domain; sequence PFTAAQYEELEQQALIYKYLVAGVPVPADLLLPIRR. 2 consecutive short sequence motifs (bipartite nuclear localization signal) follow at residues 111 to 129 and 147 to 154; these read KKLDPEPGRCRRTDGKKWR and RGRNRSRK. Residues 114–158 enclose the WRC domain; sequence DPEPGRCRRTDGKKWRCSKEAAPDSKYCERHMHRGRNRSRKPVEA. The interval 145–176 is disordered; sequence MHRGRNRSRKPVEAQLVAPHSQPPATAPAAAV.

Belongs to the GRF family.

The protein localises to the nucleus. In terms of biological role, transcription activator that plays a regulatory role in gibberellin-induced stem elongation. The sequence is that of Growth-regulating factor 3 (GRF3) from Oryza sativa subsp. japonica (Rice).